Reading from the N-terminus, the 335-residue chain is tRNA N6-adenosine threonylcarbamoyltransferase (335 aa).

Residues His-111 and His-115 each coordinate Fe cation. Substrate-binding positions include 133 to 137, Asp-166, Gly-179, and Asn-276; that span reads LISGG. Asp-301 contributes to the Fe cation binding site.

Belongs to the KAE1 / TsaD family. Fe(2+) is required as a cofactor.

The protein localises to the cytoplasm. It catalyses the reaction L-threonylcarbamoyladenylate + adenosine(37) in tRNA = N(6)-L-threonylcarbamoyladenosine(37) in tRNA + AMP + H(+). Its function is as follows. Required for the formation of a threonylcarbamoyl group on adenosine at position 37 (t(6)A37) in tRNAs that read codons beginning with adenine. Is involved in the transfer of the threonylcarbamoyl moiety of threonylcarbamoyl-AMP (TC-AMP) to the N6 group of A37, together with TsaE and TsaB. TsaD likely plays a direct catalytic role in this reaction. In Wolbachia sp. subsp. Brugia malayi (strain TRS), this protein is tRNA N6-adenosine threonylcarbamoyltransferase.